A 121-amino-acid polypeptide reads, in one-letter code: MNLSYLVACGLLVTFLSDKMDAQPLTPAQQKSLRSLLGEELAEFLESGENENRLDDVRSRMRLLRDLRVDTRARGMWARLLNDQPASRRHKSGSKKGGSTSRSGCFGHKMDRIGTISGMGC.

The first 22 residues, 1–22, serve as a signal peptide directing secretion; sequence MNLSYLVACGLLVTFLSDKMDA. Residues 23–96 constitute a propeptide that is removed on maturation; it reads QPLTPAQQKS…SRRHKSGSKK (74 aa). Residues 80–109 are disordered; that stretch reads LLNDQPASRRHKSGSKKGGSTSRSGCFGHK. A disulfide bridge links C105 with C121.

This sequence belongs to the natriuretic peptide family. Brain, spinal cord, spleen, heart and fin, and to a lower extent in gill and ovary.

Its subcellular location is the secreted. Exhibits natriuretic and vasodepressant activity. Has cGMP-stimulating activity. May help to regulate body fluid homeostasis in a variety of aquatic environments. This chain is C-type natriuretic peptide 4, found in Oryzias latipes (Japanese rice fish).